Here is a 723-residue protein sequence, read N- to C-terminus: LPS-assembly protein LptD (723 aa).

An N-terminal signal peptide occupies residues 1–23 (MNTLKLCLILYACLVLLPVRVMS).

The protein belongs to the LptD family. Component of the lipopolysaccharide transport and assembly complex. Interacts with LptE and LptA.

It is found in the cell outer membrane. In terms of biological role, together with LptE, is involved in the assembly of lipopolysaccharide (LPS) at the surface of the outer membrane. In Nitrosomonas europaea (strain ATCC 19718 / CIP 103999 / KCTC 2705 / NBRC 14298), this protein is LPS-assembly protein LptD.